The sequence spans 173 residues: Large ribosomal subunit protein uL10 (173 aa).

This sequence belongs to the universal ribosomal protein uL10 family. In terms of assembly, part of the ribosomal stalk of the 50S ribosomal subunit. The N-terminus interacts with L11 and the large rRNA to form the base of the stalk. The C-terminus forms an elongated spine to which L12 dimers bind in a sequential fashion forming a multimeric L10(L12)X complex.

Functionally, forms part of the ribosomal stalk, playing a central role in the interaction of the ribosome with GTP-bound translation factors. The protein is Large ribosomal subunit protein uL10 of Bifidobacterium adolescentis (strain ATCC 15703 / DSM 20083 / NCTC 11814 / E194a).